The chain runs to 345 residues: Tetraacyldisaccharide 4'-kinase (345 aa).

61–68 contributes to the ATP binding site; that stretch reads TAGGTGKT.

The protein belongs to the LpxK family.

The catalysed reaction is a lipid A disaccharide + ATP = a lipid IVA + ADP + H(+). Its pathway is glycolipid biosynthesis; lipid IV(A) biosynthesis; lipid IV(A) from (3R)-3-hydroxytetradecanoyl-[acyl-carrier-protein] and UDP-N-acetyl-alpha-D-glucosamine: step 6/6. In terms of biological role, transfers the gamma-phosphate of ATP to the 4'-position of a tetraacyldisaccharide 1-phosphate intermediate (termed DS-1-P) to form tetraacyldisaccharide 1,4'-bis-phosphate (lipid IVA). The sequence is that of Tetraacyldisaccharide 4'-kinase from Xanthomonas axonopodis pv. citri (strain 306).